The primary structure comprises 705 residues: Phosphatidylinositol 4-phosphate 5-kinase 3 (705 aa).

MORN repeat units follow at residues 58–80 (YNGG…DGCM), 81–103 (YEGE…SGAT), 104–126 (YEGQ…DGDT), 127–149 (YRGH…NGDG), 150–172 (YQGN…DGNE), 173–195 (YVGE…NGNR), and 196–218 (YDGL…EEKT). Positions 321-701 (TVTAGHKNYD…RFRDFINKIF (381 aa)) constitute a PIPK domain. The tract at residues 661–682 (YDITKKLEHAYKSLHADPASIS) is activation loop.

It localises to the cell membrane. The catalysed reaction is a 1,2-diacyl-sn-glycero-3-phospho-(1D-myo-inositol 4-phosphate) + ATP = a 1,2-diacyl-sn-glycero-3-phospho-(1D-myo-inositol-4,5-bisphosphate) + ADP + H(+). In terms of biological role, with DRP1A and DRP2B, required for the precise coordination of polar ARAC3/ROP6 and ARAC4/ROP2 placement and subsequent root hair positioning during planar polarity formation in root hair-forming cells, probably by mediating the correct basal-to-planar polarity switching of D6PK into the polar, lipid-enriched domain. This Arabidopsis thaliana (Mouse-ear cress) protein is Phosphatidylinositol 4-phosphate 5-kinase 3.